Consider the following 377-residue polypeptide: tRNA(Met) cytidine acetate ligase (377 aa).

Residues 7-20 (ITEYNPFHNGHLFH), Gly100, Asn153, and Arg178 contribute to the ATP site.

This sequence belongs to the TmcAL family.

The protein resides in the cytoplasm. It catalyses the reaction cytidine(34) in elongator tRNA(Met) + acetate + ATP = N(4)-acetylcytidine(34) in elongator tRNA(Met) + AMP + diphosphate. In terms of biological role, catalyzes the formation of N(4)-acetylcytidine (ac(4)C) at the wobble position of elongator tRNA(Met), using acetate and ATP as substrates. First activates an acetate ion to form acetyladenylate (Ac-AMP) and then transfers the acetyl group to tRNA to form ac(4)C34. The sequence is that of tRNA(Met) cytidine acetate ligase from Staphylococcus epidermidis (strain ATCC 12228 / FDA PCI 1200).